We begin with the raw amino-acid sequence, 220 residues long: Lipoprotein-releasing system ATP-binding protein LolD (220 aa).

The ABC transporter domain occupies 1–220 (MRAVDIHKSY…YRMKDGQWQS (220 aa)). Residue 37 to 44 (GASGAGKS) coordinates ATP.

Belongs to the ABC transporter superfamily. Lipoprotein translocase (TC 3.A.1.125) family. As to quaternary structure, the complex is composed of two ATP-binding proteins (LolD) and two transmembrane proteins (LolC and LolE).

It localises to the cell inner membrane. Its function is as follows. Part of the ABC transporter complex LolCDE involved in the translocation of mature outer membrane-directed lipoproteins, from the inner membrane to the periplasmic chaperone, LolA. Responsible for the formation of the LolA-lipoprotein complex in an ATP-dependent manner. The polypeptide is Lipoprotein-releasing system ATP-binding protein LolD (Bdellovibrio bacteriovorus (strain ATCC 15356 / DSM 50701 / NCIMB 9529 / HD100)).